A 186-amino-acid chain; its full sequence is MLALINRILEWFKSIFWKEEMELTLVGLQFSGKTTFVNVIASGQFAEDMIPTVGFNMRKITRGNVTIKVWDIGGQPRFRSMWERYCRGVNAIVYMVDAADLDKLEASRNELHSLLDKPQLAGIPVLVLGNKRDLPGALDETGLIERMNLSSIQDREICCYSISCKEKDNIDITLQWLIQHSKSQSR.

Residues 1 to 19 (MLALINRILEWFKSIFWKE) constitute an intramembrane region (note=Mediates targeting to membranes). GTP-binding positions include 29–35 (QFSGKTT), 71–75 (DIGGQ), and 130–133 (NKRD).

This sequence belongs to the small GTPase superfamily. Arf family. Interacts with tubulin. Interacts (in GTP-bound form) with Rilpl. Interacts with unc-104. In terms of tissue distribution, expressed throughout development, from embryo to adult stage, in different tissues such as larval motor neurons, salivary glands, testis and ovaries (at protein level).

Its subcellular location is the lysosome membrane. The protein resides in the synapse. It localises to the cell projection. It is found in the axon. The protein localises to the perikaryon. In terms of biological role, required for normal functioning of the late endocytic pathway including lysosome motility and late endosome-lysosome fusion. Not required for the delivery of lysosomal membrane protein-containing vesicles to late endosomes. In larval motor neurons, mediates the anterograde axonal long-range transport of presynaptic lysosome-related vesicles required for presynaptic biogenesis and synaptic function. Acts downstream of Rab2 during presynaptic precursor vesicle biogenesis. Essential role in chromosome segregation. In Drosophila melanogaster (Fruit fly), this protein is ADP-ribosylation factor-like protein 8.